Reading from the N-terminus, the 314-residue chain is Hydroxyethylthiazole kinase (314 aa).

Residues 1–13 (MSNSASSFADVSS) show a composition bias toward low complexity. Positions 1–24 (MSNSASSFADVSSGCTAGTPVPAD) are disordered. Residue M70 coordinates substrate. 2 residues coordinate ATP: R145 and S217. Position 244 (G244) interacts with substrate.

The protein belongs to the Thz kinase family. It depends on Mg(2+) as a cofactor.

It catalyses the reaction 5-(2-hydroxyethyl)-4-methylthiazole + ATP = 4-methyl-5-(2-phosphooxyethyl)-thiazole + ADP + H(+). Its pathway is cofactor biosynthesis; thiamine diphosphate biosynthesis; 4-methyl-5-(2-phosphoethyl)-thiazole from 5-(2-hydroxyethyl)-4-methylthiazole: step 1/1. Its function is as follows. Catalyzes the phosphorylation of the hydroxyl group of 4-methyl-5-beta-hydroxyethylthiazole (THZ). This chain is Hydroxyethylthiazole kinase, found in Bifidobacterium longum subsp. infantis (strain ATCC 15697 / DSM 20088 / JCM 1222 / NCTC 11817 / S12).